The chain runs to 839 residues: Sodium/hydrogen exchanger 3 (839 aa).

The first 32 residues, 1 to 32 (MPLGVRGTRREFRFPVWGLLLLALWMLPRALG), serve as a signal peptide directing secretion. Residues 33-56 (VEEIPGPDSHEKQGFQIVTFKWHH) are Extracellular-facing. Residues 57 to 79 (VQDPYIIALWILVASLAKIVFHL) form a helical membrane-spanning segment. At 80–87 (SHKVTSVV) the chain is on the cytoplasmic side. Residues 88 to 107 (PESALLIVLGLILGGIVWAA) traverse the membrane as a helical segment. Topologically, residues 108–116 (DHIASFTLT) are extracellular. Residues 117-134 (PTVFFFYLLPPIVLDAGY) traverse the membrane as a helical segment. Residues 135 to 137 (FMP) lie on the Cytoplasmic side of the membrane. The chain crosses the membrane as a helical span at residues 138–173 (NRLFFGNLGTILLYAVIGTVWNAATTGLSLYGVYLS). Residues Gly-143, Gly-146, and Thr-147 each contribute to the a 1,2-diacyl-sn-glycero-3-phospho-(1D-myo-inositol) site. Over 174–186 (GIMGDLSIGLLDF) the chain is Extracellular. Residues 187 to 208 (LLFGSLIAAVDPVAVLAVFEEV) form a helical membrane-spanning segment. Residues 209–210 (HV) are Cytoplasmic-facing. The helical transmembrane segment at 211 to 242 (NDVLFIIVFGESLLNDAVTVVLYNVFDSFVSL) threads the bilayer. The Extracellular portion of the chain corresponds to 243–249 (GADKVTG). Residues 250–284 (VDCVKGIVSFFVVSLGGTLIGIIFAFLLSLVTRFT) form a helical membrane-spanning segment. The Cytoplasmic portion of the chain corresponds to 285–286 (KH). The chain crosses the membrane as a helical span at residues 287–309 (VRIIEPGFVFIISYLSYLTSEML). Residues 310–311 (SL) are Extracellular-facing. Residues 312 to 328 (SAILAITFCGICCQKYV) traverse the membrane as a helical segment. The Cytoplasmic portion of the chain corresponds to 329-335 (KANISEQ). A helical membrane pass occupies residues 336-364 (SATTVRYTMKMLASGAETIIFMFLGISAV). At 365 to 372 (DPAIWTWN) the chain is on the extracellular side. A helical transmembrane segment spans residues 373–394 (TAFILLTLVFISVYRAIGVVLQ). Residues 395–407 (TWLLNKYRMVQLE) are Cytoplasmic-facing. Met-403 is a binding site for a 1,2-diacyl-sn-glycero-3-phospho-(1D-myo-inositol). The chain crosses the membrane as a helical span at residues 408 to 431 (IIDQVVMSYGGLRGAVAYALVVLL). The Extracellular portion of the chain corresponds to 432 to 438 (DEKKVKE). A helical membrane pass occupies residues 439 to 472 (KNLFVSTTIIVVFFTVIFQGLTIKPLVQWLKVKK). Residues 473-839 (SEHREPKLNE…RSFLPESTHM (367 aa)) lie on the Cytoplasmic side of the membrane. Residues Gln-502, Ile-503, and His-505 each coordinate a 1,2-diacyl-sn-glycero-3-phospho-(1D-myo-inositol). 2 positions are modified to phosphoserine: Ser-560 and Ser-568. Residues 581 to 595 (RPSTVEASVSYLLRE) form an interaction with EZR region. Positions 596-673 (NVSTVCLDMQ…RKRLESFKST (78 aa)) are interaction with NHERF4. Positions 597 to 701 (VSTVCLDMQA…GQKRRNSSIP (105 aa)) are interaction with AHCYL1. 2 positions are modified to phosphoserine: Ser-598 and Ser-613. Ser-669 bears the Phosphoserine; by SGK1 mark. A compositionally biased stretch (basic residues) spans 688–697 (KRERGQKRRN). The disordered stretch occupies residues 688-710 (KRERGQKRRNSSIPNGKIPMESP). Phosphoserine is present on residues Ser-724, Ser-815, and Ser-818.

Belongs to the monovalent cation:proton antiporter 1 (CPA1) transporter (TC 2.A.36) family. In terms of assembly, homodimer. Found in the forms of complex and dynamic macromolecular complexes. Binds NHERF1 and NHERF2. Interacts with CHP1, CHP2 and SHANK2. Interacts with NHERF4 and interactions decrease in response to elevated calcium ion levels. Interacts with PDZK1 (via C-terminal PDZ domain). Interacts with AHCYL1; the interaction is required for SLC9A3 activity. Interacts with EZR; interaction targets SLC9A3 to the apical membrane. Interacts with SNX27 (via PDZ domains); directs SLC9A3 membrane insertion from early endosomes to the plasma membrane. In terms of processing, phosphorylated by PKA, which inhibits activity. Phosphorylation at Ser-669 by SGK1 is associated with increased abundance at the cell membrane.

The protein resides in the apical cell membrane. It is found in the cell membrane. The protein localises to the recycling endosome membrane. Its subcellular location is the early endosome membrane. The catalysed reaction is Na(+)(in) + H(+)(out) = Na(+)(out) + H(+)(in). Seems to switch between active and inactive modes in response to various stimuli. Activated directly or indirectly by membrane phosphatidylinositol (PIs). Regulated by a variety of auxiliary proteins, which facilitate the maturation, cell surface expression and function of the transporter. Inhibited specifically by the drug tenapanor. Its function is as follows. Plasma membrane Na(+)/H(+) antiporter. Exchanges intracellular H(+) ions for extracellular Na(+) in 1:1 stoichiometry, playing a key role in salt and fluid absorption and pH homeostasis. Major apical Na(+)/H(+) exchanger in kidney and intestine playing an important role in renal and intestine Na(+) absorption and blood pressure regulation. The protein is Sodium/hydrogen exchanger 3 (SLC9A3) of Didelphis virginiana (North American opossum).